The sequence spans 341 residues: Methionine import ATP-binding protein MetN 3 (341 aa).

The 240-residue stretch at 2-241 (ILLENVKKIY…PQQDITKRFV (240 aa)) folds into the ABC transporter domain. Residue 38–45 (GYSGAGKS) participates in ATP binding.

The protein belongs to the ABC transporter superfamily. Methionine importer (TC 3.A.1.24) family. The complex is composed of two ATP-binding proteins (MetN), two transmembrane proteins (MetI) and a solute-binding protein (MetQ).

It is found in the cell membrane. The catalysed reaction is L-methionine(out) + ATP + H2O = L-methionine(in) + ADP + phosphate + H(+). It catalyses the reaction D-methionine(out) + ATP + H2O = D-methionine(in) + ADP + phosphate + H(+). Its function is as follows. Part of the ABC transporter complex MetNIQ involved in methionine import. Responsible for energy coupling to the transport system. The sequence is that of Methionine import ATP-binding protein MetN 3 from Bacillus cereus (strain ATCC 10987 / NRS 248).